We begin with the raw amino-acid sequence, 413 residues long: MAGLAPEGSQFDARQYDAKMTELLGTEQEEFFTSYDEVYDSFDAMGLQENLLRGIYAYGFEKPSAIQQRGIVPFCKGLDVIQQAQSGTGKTATFCSGVLQQLDYSLVECQALVLAPTRELAQQIEKVMRALGDYLGVKVHACVGGTSVREDQRILQSGVHVVVGTPGRVFDMLRRQSLRPDHIKMFVLDEADEMLSRGFKDQIYDIFQLLPPKIQVGVFSATMPPEALEITRKFMSKPVRILVKRDDVTLEGIKQFYVNVDKEEWKLETLCDLYETLAITQSVIFVNTRRKVDWLTDKMRSRDHTVSATHGDMDQNTRDIIMREFRSGSSRVLITTDLLARGIDVQQVSLVINYDLPTQPENYLHRIGRSGRFGRKGVAINFVTKDDERMLFDIQKFYNVVIEELPANVADLL.

The Q motif signature appears at 40–68 (DSFDAMGLQENLLRGIYAYGFEKPSAIQQ). The Helicase ATP-binding domain maps to 71-241 (IVPFCKGLDV…RKFMSKPVRI (171 aa)). 84 to 91 (AQSGTGKT) provides a ligand contact to ATP. The short motif at 189-192 (DEAD) is the DEAD box element. In terms of domain architecture, Helicase C-terminal spans 252-413 (GIKQFYVNVD…ELPANVADLL (162 aa)).

It belongs to the DEAD box helicase family. eIF4A subfamily. As to quaternary structure, eIF4F is a multi-subunit complex, the composition of which varies with external and internal environmental conditions. It is composed of at least EIF4A, EIF4E and EIF4G.

The catalysed reaction is ATP + H2O = ADP + phosphate + H(+). Functionally, ATP-dependent RNA helicase which is a subunit of the eIF4F complex involved in cap recognition and is required for mRNA binding to ribosome. In the current model of translation initiation, eIF4A unwinds RNA secondary structures in the 5'-UTR of mRNAs which is necessary to allow efficient binding of the small ribosomal subunit, and subsequent scanning for the initiator codon. This Nicotiana tabacum (Common tobacco) protein is Eukaryotic initiation factor 4A-14.